A 224-amino-acid polypeptide reads, in one-letter code: Cytidylate kinase (224 aa).

11–19 (GPAAAGKST) is an ATP binding site.

The protein belongs to the cytidylate kinase family. Type 1 subfamily.

The protein resides in the cytoplasm. It catalyses the reaction CMP + ATP = CDP + ADP. It carries out the reaction dCMP + ATP = dCDP + ADP. The sequence is that of Cytidylate kinase from Geobacillus sp. (strain WCH70).